Consider the following 657-residue polypeptide: N-acetylgalactosaminyltransferase 7 (657 aa).

Over 1-6 the chain is Cytoplasmic; it reads MRLKIG. A helical; Signal-anchor for type II membrane protein transmembrane segment spans residues 7 to 29; it reads FILRSLLVVGSFLGLVVLWSSLS. Residues 30 to 66 form a disordered region; that stretch reads SRPDDPSPLSRMREDRDVNNPLPNRGGNGLAPGDDRF. Residues 30–657 are Lumenal-facing; it reads SRPDDPSPLS…KWEMNNIHSV (628 aa). Intrachain disulfides connect C197/C435, C426/C507, C545/C562, C585/C600, and C625/C640. The catalytic subdomain A stretch occupies residues 206–317; that stretch reads LLTSSVVIVF…VNWYAPLVAP (112 aa). Substrate-binding residues include D247 and R277. Mn(2+) is bound by residues D301 and H303. The segment at 381-443 is catalytic subdomain B; the sequence is PYRSPAMAGG…PCSRVGHIYR (63 aa). Position 412 (W412) interacts with substrate. H440 provides a ligand contact to Mn(2+). R443 contacts substrate. Positions 532 to 652 constitute a Ricin B-type lectin domain; it reads VEWGEIRGLE…GKMTQKWEMN (121 aa).

The protein belongs to the glycosyltransferase 2 family. GalNAc-T subfamily. Mn(2+) is required as a cofactor. In terms of tissue distribution, highly expressed in sublingual gland. Expressed at lower level in stomach, small intestiine and colon.

It localises to the golgi apparatus membrane. It catalyses the reaction L-seryl-[protein] + UDP-N-acetyl-alpha-D-galactosamine = a 3-O-[N-acetyl-alpha-D-galactosaminyl]-L-seryl-[protein] + UDP + H(+). The catalysed reaction is L-threonyl-[protein] + UDP-N-acetyl-alpha-D-galactosamine = a 3-O-[N-acetyl-alpha-D-galactosaminyl]-L-threonyl-[protein] + UDP + H(+). The protein operates within protein modification; protein glycosylation. Functionally, glycopeptide transferase involved in O-linked oligosaccharide biosynthesis, which catalyzes the transfer of an N-acetyl-D-galactosamine residue to an already glycosylated peptide. In contrast to other proteins of the family, it does not act as a peptide transferase that transfers GalNAc onto serine or threonine residue on the protein receptor, but instead requires the prior addition of a GalNAc on a peptide before adding additional GalNAc moieties. Some peptide transferase activity is however not excluded, considering that its appropriate peptide substrate may remain unidentified. In Rattus norvegicus (Rat), this protein is N-acetylgalactosaminyltransferase 7 (Galnt7).